Reading from the N-terminus, the 213-residue chain is ATP-dependent Clp protease proteolytic subunit (213 aa).

Ser-114 functions as the Nucleophile in the catalytic mechanism. His-139 is a catalytic residue.

It belongs to the peptidase S14 family. As to quaternary structure, fourteen ClpP subunits assemble into 2 heptameric rings which stack back to back to give a disk-like structure with a central cavity, resembling the structure of eukaryotic proteasomes.

The protein resides in the cytoplasm. It carries out the reaction Hydrolysis of proteins to small peptides in the presence of ATP and magnesium. alpha-casein is the usual test substrate. In the absence of ATP, only oligopeptides shorter than five residues are hydrolyzed (such as succinyl-Leu-Tyr-|-NHMec, and Leu-Tyr-Leu-|-Tyr-Trp, in which cleavage of the -Tyr-|-Leu- and -Tyr-|-Trp bonds also occurs).. Its function is as follows. Cleaves peptides in various proteins in a process that requires ATP hydrolysis. Has a chymotrypsin-like activity. Plays a major role in the degradation of misfolded proteins. This is ATP-dependent Clp protease proteolytic subunit from Pseudomonas syringae pv. syringae (strain B728a).